Here is a 287-residue protein sequence, read N- to C-terminus: MAGAKEIRSKIASVQNTQKITKAMEMVAASKMRKSQERMAASRPYADTMRKVIGHLANGNLEYKHPYLEERDVKRVGYLVVSTDRGLCGGLNINLFKKLLAEMKAWSDKGVQCDLAMIGSKGVSFFNSVGGNVVAQVTGMGDNPSLSELIGPVKVMLQAYDEGRLDKLYVVSNKFINTMSQVPTITQLLPLPASEDADLKRKSWDYLYEPDPKALLDTLLRRYVESQVYQGVVENLASEQAARMVAMKAATDNGGSLIKELQLVYNKARQASITQELTEIVSGAAAV.

This sequence belongs to the ATPase gamma chain family. F-type ATPases have 2 components, CF(1) - the catalytic core - and CF(0) - the membrane proton channel. CF(1) has five subunits: alpha(3), beta(3), gamma(1), delta(1), epsilon(1). CF(0) has three main subunits: a, b and c.

The protein resides in the cell inner membrane. Its function is as follows. Produces ATP from ADP in the presence of a proton gradient across the membrane. The gamma chain is believed to be important in regulating ATPase activity and the flow of protons through the CF(0) complex. This is ATP synthase gamma chain from Klebsiella pneumoniae subsp. pneumoniae (strain ATCC 700721 / MGH 78578).